A 346-amino-acid chain; its full sequence is Mannonate dehydratase (346 aa).

The protein belongs to the mannonate dehydratase family. The cofactor is Fe(2+). It depends on Mn(2+) as a cofactor.

The enzyme catalyses D-mannonate = 2-dehydro-3-deoxy-D-gluconate + H2O. It participates in carbohydrate metabolism; pentose and glucuronate interconversion. Functionally, catalyzes the dehydration of D-mannonate. The protein is Mannonate dehydratase of Cupriavidus taiwanensis (strain DSM 17343 / BCRC 17206 / CCUG 44338 / CIP 107171 / LMG 19424 / R1) (Ralstonia taiwanensis (strain LMG 19424)).